Consider the following 92-residue polypeptide: DNA-directed RNA polymerase subunit omega (92 aa).

The protein belongs to the RNA polymerase subunit omega family. As to quaternary structure, the RNAP catalytic core consists of 2 alpha, 1 beta, 1 beta' and 1 omega subunit. When a sigma factor is associated with the core the holoenzyme is formed, which can initiate transcription.

It carries out the reaction RNA(n) + a ribonucleoside 5'-triphosphate = RNA(n+1) + diphosphate. Functionally, promotes RNA polymerase assembly. Latches the N- and C-terminal regions of the beta' subunit thereby facilitating its interaction with the beta and alpha subunits. The polypeptide is DNA-directed RNA polymerase subunit omega (Shewanella baltica (strain OS223)).